A 328-amino-acid polypeptide reads, in one-letter code: 2-hydroxyisoflavanone dehydratase (328 aa).

The short motif at 85-87 (HGG) is the Involved in the stabilization of the negatively charged intermediate by the formation of the oxyanion hole element. Active-site residues include T173, D272, and H304.

This sequence belongs to the 'GDXG' lipolytic enzyme family.

The enzyme catalyses (2R,3S)-2,4',7-trihydroxyisoflavanone = daidzein + H2O + H(+). The catalysed reaction is 2-hydroxy-2,3-dihydrogenistein = genistein + H2O + H(+). It catalyses the reaction a carboxylic ester + H2O = an alcohol + a carboxylate + H(+). Its pathway is secondary metabolite biosynthesis; flavonoid biosynthesis. Functionally, dehydratase that mediates the biosynthesis of isoflavonoids. Can better use 2,7-dihydroxy-4'-methoxyisoflavanone as substrate. Has also a slight carboxylesterase activity toward p-nitrophenyl butyrate. This is 2-hydroxyisoflavanone dehydratase (HIDM) from Glycyrrhiza echinata (Licorice).